The chain runs to 811 residues: Zinc finger CCCH domain-containing protein 11A (811 aa).

3 C3H1-type zinc fingers span residues 2–30, 32–58, and 61–87; these read PNQGEDCYFFFFYSTCTKGDSCPFRHCEA, LGNETVCTLWQEGRCFRQVCRFRHMEI, and KRSEIPCYWENQPTGCQKLNCAFHHNR. Position 109 is a phosphoserine (Ser-109). Glycyl lysine isopeptide (Lys-Gly) (interchain with G-Cter in SUMO2) cross-links involve residues Lys-115 and Lys-125. Residue Ser-133 is modified to Phosphoserine. 4 disordered regions span residues 140-195, 224-258, 286-352, and 368-434; these read MKVE…GLRV, KKMKEKSKKQGEGSSGVSSLLLHPEPVPGPEKENV, GKRK…EKVN, and ERAS…TCIK. Residue Lys-141 forms a Glycyl lysine isopeptide (Lys-Gly) (interchain with G-Cter in SUMO2) linkage. Phosphoserine is present on residues Ser-150 and Ser-172. Residues 161–176 show a composition bias toward acidic residues; the sequence is ADDDEDDDDQFSEEGD. The residue at position 291 (Ser-291) is a Phosphoserine. Basic and acidic residues-rich tracts occupy residues 310–323 and 368–391; these read KKVEAPEANIDKTP and ERASQKRGELQTKLKTEGPSKTDD. Residue Thr-322 is modified to Phosphothreonine. A coiled-coil region spans residues 363 to 424; sequence EEILLERASQ…KHRQQEAERQ (62 aa). Residue Ser-371 is modified to Phosphoserine. Positions 392–403 are enriched in polar residues; that stretch reads STSGARSSSTIR. Over residues 418–434 the composition is skewed to basic and acidic residues; it reads QQEAERQKSKKDTTCIK. Residue Lys-479 forms a Glycyl lysine isopeptide (Lys-Gly) (interchain with G-Cter in SUMO2) linkage. The segment at 483-550 is disordered; it reads ALRVQQSSES…KEASGETTGV (68 aa). The span at 487–499 shows a compositional bias: low complexity; it reads QQSSESSTSSPSQ. Lys-620 is covalently cross-linked (Glycyl lysine isopeptide (Lys-Gly) (interchain with G-Cter in SUMO2)). The tract at residues 716–769 is disordered; the sequence is TVPEAENPRDSLVLPPTQSSSDSSPPEVSGPSSSQMSMKTRRLSSASTGKPQLS. Residues 730 to 749 show a composition bias toward low complexity; sequence PPTQSSSDSSPPEVSGPSSS. Polar residues predominate over residues 750–766; it reads QMSMKTRRLSSASTGKP.

As to quaternary structure, interacts with TREX complex components THOC2, DDX39 and POLDIP3; the interactions are ATP-dependent. Interacts with PABPN1; this interaction retains ZC3H11A in nuclear speckles. Interacts with KPNA3.

Its subcellular location is the nucleus speckle. Its function is as follows. Through its association with TREX complex components, may participate in the export and post-transcriptional coordination of selected mRNA transcripts, including those required to maintain the metabolic processes in embryonic cells. Binds RNA. In Pongo abelii (Sumatran orangutan), this protein is Zinc finger CCCH domain-containing protein 11A (ZC3H11A).